The primary structure comprises 439 residues: D-inositol 3-phosphate glycosyltransferase (439 aa).

A 1D-myo-inositol 3-phosphate-binding site is contributed by His21. UDP-N-acetyl-alpha-D-glucosamine-binding positions include 27-28 (QP) and Gly35. 1D-myo-inositol 3-phosphate-binding positions include 32–37 (DAGGMN), Lys90, Tyr123, Thr147, and Arg167. Arg241, Lys246, and Gln299 together coordinate UDP-N-acetyl-alpha-D-glucosamine. The Mg(2+) site is built by Tyr308, Arg309, and Ala311. Residues Glu321 and Glu329 each contribute to the UDP-N-acetyl-alpha-D-glucosamine site. Thr335 lines the Mg(2+) pocket.

The protein belongs to the glycosyltransferase group 1 family. MshA subfamily. In terms of assembly, homodimer.

The enzyme catalyses 1D-myo-inositol 3-phosphate + UDP-N-acetyl-alpha-D-glucosamine = 1D-myo-inositol 2-acetamido-2-deoxy-alpha-D-glucopyranoside 3-phosphate + UDP + H(+). Functionally, catalyzes the transfer of a N-acetyl-glucosamine moiety to 1D-myo-inositol 3-phosphate to produce 1D-myo-inositol 2-acetamido-2-deoxy-glucopyranoside 3-phosphate in the mycothiol biosynthesis pathway. The chain is D-inositol 3-phosphate glycosyltransferase from Mycobacterium sp. (strain JLS).